The following is a 122-amino-acid chain: Ribosome-binding factor A (122 aa).

Belongs to the RbfA family. As to quaternary structure, monomer. Binds 30S ribosomal subunits, but not 50S ribosomal subunits or 70S ribosomes.

It localises to the cytoplasm. In terms of biological role, one of several proteins that assist in the late maturation steps of the functional core of the 30S ribosomal subunit. Associates with free 30S ribosomal subunits (but not with 30S subunits that are part of 70S ribosomes or polysomes). Required for efficient processing of 16S rRNA. May interact with the 5'-terminal helix region of 16S rRNA. The protein is Ribosome-binding factor A of Moorella thermoacetica (strain ATCC 39073 / JCM 9320).